An 85-amino-acid chain; its full sequence is Toxin BmKa3 (85 aa).

A signal peptide spans 1–19 (MNYLVFFSLALLLMTGVES). The region spanning 21 to 83 (RDGYIADDKN…VPIRVPGKCN (63 aa)) is the LCN-type CS-alpha/beta domain. Cystine bridges form between Cys31–Cys82, Cys35–Cys55, Cys41–Cys65, and Cys45–Cys67.

This sequence belongs to the long (4 C-C) scorpion toxin superfamily. Sodium channel inhibitor family. Alpha subfamily. Expressed by the venom gland.

It localises to the secreted. Alpha toxins bind voltage-independently at site-3 of sodium channels (Nav) and inhibit the inactivation of the activated channels, thereby blocking neuronal transmission. The protein is Toxin BmKa3 of Olivierus martensii (Manchurian scorpion).